Consider the following 219-residue polypeptide: Claudin-3 (219 aa).

At 1–8 (MSMGLEIT) the chain is on the cytoplasmic side. The helical transmembrane segment at 9-29 (GTSLAVLGWLCTIVCCALPMW) threads the bilayer. Over 30–80 (RVSAFIGSSIITAQITWEGLWMNCVVQSTGQMQCKMYDSLLALPQDLQAAR) the chain is Extracellular. A helical membrane pass occupies residues 81 to 101 (ALIVVSILLAAFGLLVALVGA). The Cytoplasmic portion of the chain corresponds to 102–115 (QCTNCVQDETAKAK). The helical transmembrane segment at 116-136 (ITIVAGVLFLLAAVLTLVPVS) threads the bilayer. The Extracellular portion of the chain corresponds to 137-161 (WSANTIIRDFYNPLVPEAQKREMGT). Residues 162 to 182 (GLYVGWAAAALQLLGGALLCC) form a helical membrane-spanning segment. Residues 183–219 (SCPPREKYAPTKILYSAPRSTGPGTGTGTAYDRKDYV) lie on the Cytoplasmic side of the membrane. Position 197 is a phosphotyrosine (Tyr-197). Phosphoserine is present on Ser-198. An interactions with TJP1, TJP2 and TJP3 region spans residues 218-219 (YV).

It belongs to the claudin family. Can form homo- and heteropolymers with other CLDN. Homopolymers interact with CLDN1 and CLDN2 homopolymers. Interacts in cis (within the same plasma membrane) with CLDN19. Directly interacts with TJP1/ZO-1, TJP2/ZO-2 and TJP3/ZO-3.

The protein localises to the cell junction. It is found in the tight junction. The protein resides in the cell membrane. Its function is as follows. Plays a major role in tight junction-specific obliteration of the intercellular space, through calcium-independent cell-adhesion activity. The chain is Claudin-3 (Cldn3) from Rattus norvegicus (Rat).